Consider the following 525-residue polypeptide: Probable protein kinase UbiB (525 aa).

In terms of domain architecture, Protein kinase spans 118–500 (DFERVPVASA…QKRTNRLLQG (383 aa)). Residues 124–132 (VASASIAQV) and lysine 150 contribute to the ATP site. The Proton acceptor role is filled by aspartate 285. A helical membrane pass occupies residues 501–521 (LLLFGVAVGVGAALARVFLAL).

Belongs to the ABC1 family. UbiB subfamily.

It is found in the cell inner membrane. Its pathway is cofactor biosynthesis; ubiquinone biosynthesis [regulation]. Its function is as follows. Is probably a protein kinase regulator of UbiI activity which is involved in aerobic coenzyme Q (ubiquinone) biosynthesis. The polypeptide is Probable protein kinase UbiB (Paraburkholderia xenovorans (strain LB400)).